The following is a 614-amino-acid chain: MTTLDSNNNTGGVITYIGSSGSSPNRTSPESLYSDSSNGSFQSLTQGCPTYFPPSPTGSLTQDPARSFGSIPPSLGDDGSPSSSSSSSSSSSSSFYNGSPPGGLQVALEDGNRVSPSKSTSNITKLNGMVLLCKVCGDVASGFHYGVHACEGCKGFFRRSIQQNIQYKRCLKNENCSIVRINRNRCQQCRFKKCLSVGMSRDAVRFGRIPKREKQRMLAEMQSAMNLANNQLSSQCPLETPPTQHPTPGPMGPSPPPAPAPSPLVGFSQFPQQLTPPRSPSPEPTVEDVISQVARAHREIFTYAHDKLGTSPGNFNANHASGNRPATTPHRWESQGCPPAPNDNIMAAQRHNEALNSLRQASSSYPPPWPPGATHHSCHQPNSNGHRLCPTHVYPAPEGEAPVNSPRQGNSKNVLLACPMNMYPHGRSGRTVQEIWEDFSMSFTPAVREVVEFAKHIPGFRDLSQHDQVTLLKAGTFEVLMVRFASLFNVKDQTVMFLSRTTYSLQELGAMGMGDLLNAMFDFSEKLNSLALTEEELGLFTAVVLVSADRSGMENSASVEQLQETLLRALRALVLKNRPSETSRFTKLLLKLPDLRTLNNMHSEKLLSFRVDAQ.

Residues M1 to C48 show a composition bias toward polar residues. The interval M1–S70 is required for phosphorylation by CSNK1E and cytoplasmic localization. The tract at residues M1–T120 is disordered. A modulating region spans residues M1–M129. The interval P49–T285 is crucial for activation of GJA1. A phosphoserine; by GSK3-beta mark is found at S55 and S59. The span at G69–G103 shows a compositional bias: low complexity. The segment at residues V130–F206 is a DNA-binding region (nuclear receptor). 2 NR C4-type zinc fingers span residues C133–C153 and C170–C194. K192 and K193 each carry N6-acetyllysine; by KAT5. A disordered region spans residues S233 to V286. The segment covering E239 to S262 has biased composition (pro residues). Residue T275 is modified to Phosphothreonine; by CDK1. The 330-residue stretch at T285 to Q614 folds into the NR LBD domain. C418 contributes to the heme binding site. Residue K591 is modified to N6-acetyllysine. Position 602 (H602) interacts with heme.

Belongs to the nuclear hormone receptor family. NR1 subfamily. In terms of assembly, binds DNA as a monomer or a homodimer. Interacts with C1D, NR2E3, SP1 and ZNHIT1. Interacts with OPHN1 (via C-terminus). Interacts with PER2; the interaction associates PER2 to BMAL1 promoter region. Interacts with CRY1. Interacts with CCAR2. Interacts with SIAH2. Interacts with FBXW7 and CDK1. Interacts with HUWE1. Interacts with NR0B2. Interacts with NFIL3. Interacts (via domain NR LBD) with HSP90AA1 and HSP90AB1. Ubiquitinated, leading to its proteasomal degradation. Ubiquitinated by the SCF(FBXW7) complex when phosphorylated by CDK1 leading to its proteasomal degradation. Ubiquitinated by SIAH2; leading to its proteasomal degradation. Rapidly ubiquitinated in response to inflammatory triggers and sumoylation is a prerequisite to its ubiquitination. In terms of processing, sumoylated by UBE2I, desumoylated by SENP1, and sumoylation is a prerequisite to its ubiquitination. Post-translationally, phosphorylated by CSNK1E; phosphorylation enhances its cytoplasmic localization. Undergoes lysosome-mediated degradation in a time-dependent manner in the liver. In terms of tissue distribution, expressed in all tissues and cell lines examined. Expressed at high levels in some squamous carcinoma cell lines.

It is found in the nucleus. It localises to the cytoplasm. The protein localises to the cell projection. The protein resides in the dendrite. Its subcellular location is the dendritic spine. In terms of biological role, transcriptional repressor which coordinates circadian rhythm and metabolic pathways in a heme-dependent manner. Integral component of the complex transcription machinery that governs circadian rhythmicity and forms a critical negative limb of the circadian clock by directly repressing the expression of core clock components BMAL1, CLOCK and CRY1. Also regulates genes involved in metabolic functions, including lipid and bile acid metabolism, adipogenesis, gluconeogenesis and the macrophage inflammatory response. Acts as a receptor for heme which stimulates its interaction with the NCOR1/HDAC3 corepressor complex, enhancing transcriptional repression. Recognizes two classes of DNA response elements within the promoter of its target genes and can bind to DNA as either monomers or homodimers, depending on the nature of the response element. Binds as a monomer to a response element composed of the consensus half-site motif 5'-[A/G]GGTCA-3' preceded by an A/T-rich 5' sequence (RevRE), or as a homodimer to a direct repeat of the core motif spaced by two nucleotides (RevDR-2). Acts as a potent competitive repressor of ROR alpha (RORA) function and regulates the levels of its ligand heme by repressing the expression of PPARGC1A, a potent inducer of heme synthesis. Regulates lipid metabolism by repressing the expression of APOC3 and by influencing the activity of sterol response element binding proteins (SREBPs); represses INSIG2 which interferes with the proteolytic activation of SREBPs which in turn govern the rhythmic expression of enzymes with key functions in sterol and fatty acid synthesis. Regulates gluconeogenesis via repression of G6PC1 and PEPCK and adipocyte differentiation via repression of PPARG. Regulates glucagon release in pancreatic alpha-cells via the AMPK-NAMPT-SIRT1 pathway and the proliferation, glucose-induced insulin secretion and expression of key lipogenic genes in pancreatic-beta cells. Positively regulates bile acid synthesis by increasing hepatic expression of CYP7A1 via repression of NR0B2 and NFIL3 which are negative regulators of CYP7A1. Modulates skeletal muscle oxidative capacity by regulating mitochondrial biogenesis and autophagy; controls mitochondrial biogenesis and respiration by interfering with the STK11-PRKAA1/2-SIRT1-PPARGC1A signaling pathway. Represses the expression of SERPINE1/PAI1, an important modulator of cardiovascular disease and the expression of inflammatory cytokines and chemokines in macrophages. Represses gene expression at a distance in macrophages by inhibiting the transcription of enhancer-derived RNAs (eRNAs). Plays a role in the circadian regulation of body temperature and negatively regulates thermogenic transcriptional programs in brown adipose tissue (BAT); imposes a circadian oscillation in BAT activity, increasing body temperature when awake and depressing thermogenesis during sleep. In concert with NR2E3, regulates transcriptional networks critical for photoreceptor development and function. In addition to its activity as a repressor, can also act as a transcriptional activator. In the ovarian granulosa cells acts as a transcriptional activator of STAR which plays a role in steroid biosynthesis. In collaboration with SP1, activates GJA1 transcription in a heme-independent manner. Represses the transcription of CYP2B10, CYP4A10 and CYP4A14. Represses the transcription of CES2. Represses and regulates the circadian expression of TSHB in a NCOR1-dependent manner. Negatively regulates the protein stability of NR3C1 and influences the time-dependent subcellular distribution of NR3C1, thereby affecting its transcriptional regulatory activity. Plays a critical role in the circadian control of neutrophilic inflammation in the lung; under resting, non-stress conditions, acts as a rhythmic repressor to limit inflammatory activity whereas in the presence of inflammatory triggers undergoes ubiquitin-mediated degradation thereby relieving inhibition of the inflammatory response. Plays a key role in the circadian regulation of microglial activation and neuroinflammation; suppresses microglial activation through the NF-kappaB pathway in the central nervous system. Plays a role in the regulation of the diurnal rhythms of lipid and protein metabolism in the skeletal muscle via transcriptional repression of genes controlling lipid and amino acid metabolism in the muscle. The sequence is that of Nuclear receptor subfamily 1 group D member 1 (NR1D1) from Ovis aries (Sheep).